A 177-amino-acid polypeptide reads, in one-letter code: Large ribosomal subunit protein uL6 (177 aa).

Residues 151-177 (YRPPEPYKGKGIRYSDEHVVRKEAKKK) are disordered. Positions 155-177 (EPYKGKGIRYSDEHVVRKEAKKK) are enriched in basic and acidic residues.

This sequence belongs to the universal ribosomal protein uL6 family. Part of the 50S ribosomal subunit.

In terms of biological role, this protein binds to the 23S rRNA, and is important in its secondary structure. It is located near the subunit interface in the base of the L7/L12 stalk, and near the tRNA binding site of the peptidyltransferase center. This is Large ribosomal subunit protein uL6 from Psychrobacter sp. (strain PRwf-1).